Consider the following 191-residue polypeptide: Crossover junction endodeoxyribonuclease RuvC (191 aa).

Catalysis depends on residues Asp7, Glu67, and Asp141. Positions 7, 67, and 141 each coordinate Mg(2+).

Belongs to the RuvC family. Homodimer which binds Holliday junction (HJ) DNA. The HJ becomes 2-fold symmetrical on binding to RuvC with unstacked arms; it has a different conformation from HJ DNA in complex with RuvA. In the full resolvosome a probable DNA-RuvA(4)-RuvB(12)-RuvC(2) complex forms which resolves the HJ. It depends on Mg(2+) as a cofactor.

The protein resides in the cytoplasm. The catalysed reaction is Endonucleolytic cleavage at a junction such as a reciprocal single-stranded crossover between two homologous DNA duplexes (Holliday junction).. The RuvA-RuvB-RuvC complex processes Holliday junction (HJ) DNA during genetic recombination and DNA repair. Endonuclease that resolves HJ intermediates. Cleaves cruciform DNA by making single-stranded nicks across the HJ at symmetrical positions within the homologous arms, yielding a 5'-phosphate and a 3'-hydroxyl group; requires a central core of homology in the junction. The consensus cleavage sequence is 5'-(A/T)TT(C/G)-3'. Cleavage occurs on the 3'-side of the TT dinucleotide at the point of strand exchange. HJ branch migration catalyzed by RuvA-RuvB allows RuvC to scan DNA until it finds its consensus sequence, where it cleaves and resolves the cruciform DNA. This is Crossover junction endodeoxyribonuclease RuvC from Myxococcus xanthus (strain DK1622).